A 202-amino-acid chain; its full sequence is Recombination protein RecR (202 aa).

The segment at 61–76 adopts a C4-type zinc-finger fold; it reads CARCNSFTEDEVCATC. The 96-residue stretch at 84-179 folds into the Toprim domain; sequence GLLCIVETPA…KVTRLARGVP (96 aa).

This sequence belongs to the RecR family.

In terms of biological role, may play a role in DNA repair. It seems to be involved in an RecBC-independent recombinational process of DNA repair. It may act with RecF and RecO. The protein is Recombination protein RecR of Bordetella pertussis (strain Tohama I / ATCC BAA-589 / NCTC 13251).